A 363-amino-acid polypeptide reads, in one-letter code: Phosphoserine aminotransferase (363 aa).

Arg42 lines the L-glutamate pocket. Residues 76–77 (GR), Trp102, Thr156, Asp175, and Gln198 each bind pyridoxal 5'-phosphate. Lys199 is subject to N6-(pyridoxal phosphate)lysine. 240 to 241 (NT) is a binding site for pyridoxal 5'-phosphate.

The protein belongs to the class-V pyridoxal-phosphate-dependent aminotransferase family. SerC subfamily. As to quaternary structure, homodimer. It depends on pyridoxal 5'-phosphate as a cofactor.

It is found in the cytoplasm. The enzyme catalyses O-phospho-L-serine + 2-oxoglutarate = 3-phosphooxypyruvate + L-glutamate. It carries out the reaction 4-(phosphooxy)-L-threonine + 2-oxoglutarate = (R)-3-hydroxy-2-oxo-4-phosphooxybutanoate + L-glutamate. The protein operates within amino-acid biosynthesis; L-serine biosynthesis; L-serine from 3-phospho-D-glycerate: step 2/3. Its pathway is cofactor biosynthesis; pyridoxine 5'-phosphate biosynthesis; pyridoxine 5'-phosphate from D-erythrose 4-phosphate: step 3/5. Functionally, catalyzes the reversible conversion of 3-phosphohydroxypyruvate to phosphoserine and of 3-hydroxy-2-oxo-4-phosphonooxybutanoate to phosphohydroxythreonine. This chain is Phosphoserine aminotransferase, found in Shewanella frigidimarina (strain NCIMB 400).